Consider the following 270-residue polypeptide: Acyl-[acyl-carrier-protein]--UDP-N-acetylglucosamine O-acyltransferase (270 aa).

This sequence belongs to the transferase hexapeptide repeat family. LpxA subfamily. As to quaternary structure, homotrimer.

It localises to the cytoplasm. It carries out the reaction a (3R)-hydroxyacyl-[ACP] + UDP-N-acetyl-alpha-D-glucosamine = a UDP-3-O-[(3R)-3-hydroxyacyl]-N-acetyl-alpha-D-glucosamine + holo-[ACP]. The protein operates within glycolipid biosynthesis; lipid IV(A) biosynthesis; lipid IV(A) from (3R)-3-hydroxytetradecanoyl-[acyl-carrier-protein] and UDP-N-acetyl-alpha-D-glucosamine: step 1/6. In terms of biological role, involved in the biosynthesis of lipid A, a phosphorylated glycolipid that anchors the lipopolysaccharide to the outer membrane of the cell. This chain is Acyl-[acyl-carrier-protein]--UDP-N-acetylglucosamine O-acyltransferase, found in Sinorhizobium medicae (strain WSM419) (Ensifer medicae).